A 120-amino-acid chain; its full sequence is NAD(P)H-quinone oxidoreductase subunit 3, chloroplastic (120 aa).

The next 3 helical transmembrane spans lie at 7-27 (YDTF…AFSI), 64-84 (MFAL…PWAM), and 88-108 (ILGL…IVGL).

The protein belongs to the complex I subunit 3 family. As to quaternary structure, NDH is composed of at least 16 different subunits, 5 of which are encoded in the nucleus.

The protein localises to the plastid. It is found in the chloroplast thylakoid membrane. The catalysed reaction is a plastoquinone + NADH + (n+1) H(+)(in) = a plastoquinol + NAD(+) + n H(+)(out). The enzyme catalyses a plastoquinone + NADPH + (n+1) H(+)(in) = a plastoquinol + NADP(+) + n H(+)(out). NDH shuttles electrons from NAD(P)H:plastoquinone, via FMN and iron-sulfur (Fe-S) centers, to quinones in the photosynthetic chain and possibly in a chloroplast respiratory chain. The immediate electron acceptor for the enzyme in this species is believed to be plastoquinone. Couples the redox reaction to proton translocation, and thus conserves the redox energy in a proton gradient. The polypeptide is NAD(P)H-quinone oxidoreductase subunit 3, chloroplastic (Cryptomeria japonica (Japanese cedar)).